The chain runs to 511 residues: MALRAMRGIVNGAAPELPVPTSGPLAGSREQALAVSRNYLSQPRLTYKTVSGVNGPLVILDHVKFPRYAEIVHLTLPDGTKRSGQVLEVSGSKAVVQVFEGTSGIDAKKTSCEFTGDILRTPVSEDMLGRVFNGSGKPIDRGPVVLAEDFLDIMGQPINPQCRIYPEEMIQTGISAIDGMNSIARGQKIPIFSAAGLPHNEIAAQICRQAGLVKKSKDVVDYSEENFAIVFAAMGVNMETARFFKSDFEENGSMDNVCLFLNLANDPTIERIITPRLALTTAEFLAYQCEKHVLVILTDMSSYAEALREVSAAREEVPGRRGFPGYMYTDLATIYERAGRVEGRNGSITQIPILTMPNDDITHPIPDLTGYITEGQIYVDRQLHNRQIYPPINVLPSLSRLMKSAIGEGMTRKDHADVSNQLYACYAIGKDVQAMKAVVGEEALTSDDLLYLEFLQKFERNFIAQGPYENRTVYETLDIGWQLLRIFPKEMLKRIPQSTLSEFYPRDSAKH.

Arg400 contacts ATP.

This sequence belongs to the ATPase alpha/beta chains family. As to quaternary structure, V-ATPase is a heteromultimeric enzyme made up of two complexes: the ATP-hydrolytic V1 complex and the proton translocation V0 complex. The V1 complex consists of three catalytic AB heterodimers that form a heterohexamer, three peripheral stalks each consisting of EG heterodimers, one central rotor including subunits D and F, and the regulatory subunits C and H. The proton translocation complex V0 consists of the proton transport subunit a, a ring of proteolipid subunits c9c'', rotary subunit d, subunits e and f, and the accessory subunits ATP6AP1/Ac45 and ATP6AP2/PRR. Expressed in brain (at protein level). Expressed in all tissues tested, but highest in brain and in adrenal medulla.

It is found in the apical cell membrane. It localises to the melanosome. Its subcellular location is the cytoplasm. The protein localises to the cytoplasmic vesicle. The protein resides in the clathrin-coated vesicle membrane. It is found in the secretory vesicle. It localises to the synaptic vesicle membrane. Functionally, non-catalytic subunit of the V1 complex of vacuolar(H+)-ATPase (V-ATPase), a multisubunit enzyme composed of a peripheral complex (V1) that hydrolyzes ATP and a membrane integral complex (V0) that translocates protons. V-ATPase is responsible for acidifying and maintaining the pH of intracellular compartments and in some cell types, is targeted to the plasma membrane, where it is responsible for acidifying the extracellular environment. In renal intercalated cells, can partially compensate the lack of ATP6V1B1 and mediate secretion of protons (H+) into the urine under base-line conditions but not in conditions of acid load. This Bos taurus (Bovine) protein is V-type proton ATPase subunit B, brain isoform (ATP6V1B2).